The primary structure comprises 308 residues: MFDPETLRTFIAVAETGSFSKAAERLCKTTATISYRIKLLEENTGVALFFRTTRSVTLTAAGEHLLCQARDWLGWLESMPSELQQVNDGVERQVNIVINNLLYNPQAVARLLAWLNERYPFTQFHISRQIYMGVWDSLLYEGFSLAIGVTGTEALANTFSLDPLGSVQWRFVMAADHPLANVEEPLTEAQLRRFPAVNIEDSARTLTKRVAWRLPGQKEIIVPDMETKIAAHLAGVGIGFLPKSLCQSMLDNQQLVSRVIPTMRPPSPLSLAWRKFGSGKAVEDIVTLFTQRRPEISGFLEIFGNPRS.

The region spanning 2 to 59 is the HTH lysR-type domain; it reads FDPETLRTFIAVAETGSFSKAAERLCKTTATISYRIKLLEENTGVALFFRTTRSVTLT. The segment at residues 19-38 is a DNA-binding region (H-T-H motif); the sequence is FSKAAERLCKTTATISYRIK.

This sequence belongs to the LysR transcriptional regulatory family.

Positive regulator essential for the expression of allD operon. Binds to the allD promoter. In Escherichia coli O1:K1 / APEC, this protein is HTH-type transcriptional activator AllS (allS).